The chain runs to 68 residues: Small ribosomal subunit protein bS21 (68 aa).

Residues 39–68 (PPSVKRVRKKQESERRHRKERAMRRRMMEE) form a disordered region. The segment covering 54-68 (RHRKERAMRRRMMEE) has biased composition (basic residues).

This sequence belongs to the bacterial ribosomal protein bS21 family.

The protein is Small ribosomal subunit protein bS21 of Orientia tsutsugamushi (strain Ikeda) (Rickettsia tsutsugamushi).